A 347-amino-acid chain; its full sequence is Protein RecA (347 aa).

67-74 (GPESSGKT) provides a ligand contact to ATP.

The protein belongs to the RecA family.

The protein localises to the cytoplasm. Functionally, can catalyze the hydrolysis of ATP in the presence of single-stranded DNA, the ATP-dependent uptake of single-stranded DNA by duplex DNA, and the ATP-dependent hybridization of homologous single-stranded DNAs. It interacts with LexA causing its activation and leading to its autocatalytic cleavage. This chain is Protein RecA, found in Sulfurovum sp. (strain NBC37-1).